We begin with the raw amino-acid sequence, 496 residues long: Glycerol kinase (496 aa).

Thr-12 contributes to the ADP binding site. Residues Thr-12, Thr-13, and Ser-14 each contribute to the ATP site. Thr-12 provides a ligand contact to sn-glycerol 3-phosphate. Residue Arg-16 participates in ADP binding. Residues Arg-82, Glu-83, and Tyr-134 each contribute to the sn-glycerol 3-phosphate site. Glycerol-binding residues include Arg-82, Glu-83, and Tyr-134. The residue at position 230 (His-230) is a Phosphohistidine; by HPr. Sn-glycerol 3-phosphate is bound at residue Asp-244. Asp-244 and Gln-245 together coordinate glycerol. ADP-binding residues include Thr-266 and Gly-309. The ATP site is built by Thr-266, Gly-309, Gln-313, and Gly-410. Residues Gly-410 and Asn-414 each coordinate ADP.

Belongs to the FGGY kinase family. Homotetramer and homodimer (in equilibrium). Post-translationally, the phosphoenolpyruvate-dependent sugar phosphotransferase system (PTS), including enzyme I, and histidine-containing protein (HPr) are required for the phosphorylation, which leads to the activation of the enzyme.

It catalyses the reaction glycerol + ATP = sn-glycerol 3-phosphate + ADP + H(+). It participates in polyol metabolism; glycerol degradation via glycerol kinase pathway; sn-glycerol 3-phosphate from glycerol: step 1/1. With respect to regulation, activated by phosphorylation and inhibited by fructose 1,6-bisphosphate (FBP). Key enzyme in the regulation of glycerol uptake and metabolism. Catalyzes the phosphorylation of glycerol to yield sn-glycerol 3-phosphate. In Bacillus cereus (strain Q1), this protein is Glycerol kinase.